An 84-amino-acid chain; its full sequence is Limulin (84 aa).

A Pentraxin (PTX) domain is found at Ile6–Val84. The Ca(2+) site is built by Asp67 and Asn68.

It belongs to the pentraxin family. In terms of assembly, homopentamer. Pentraxin (or pentaxin) have a discoid arrangement of 5 non-covalently bound subunits. It depends on Ca(2+) as a cofactor. Post-translationally, a disulfide bond links Cys-38 to a Cys in the C-terminal half of the chain of 163 residues.

In terms of biological role, lectin that binds sialic acid. Displays antiviral activity and therefore may contribute to defense against infections. This is Limulin from Limulus polyphemus (Atlantic horseshoe crab).